Here is an 805-residue protein sequence, read N- to C-terminus: Rho GTPase-activating protein 42 (805 aa).

The 256-residue stretch at 7–262 (EFSDSFLDSP…IRSAEQDFKA (256 aa)) folds into the BAR domain. A coiled-coil region spans residues 225–262 (KQQLQFNLQNTRNNFESTRQEVENLMRRIRSAEQDFKA). A PH domain is found at 265–374 (QWTMEGFLYV…WMEAMDGKEP (110 aa)). One can recognise a Rho-GAP domain in the interval 376-572 (YTLPALLSKK…ILIENYDKIF (197 aa)). 3 disordered regions span residues 576-600 (PDPNVPLPHPQSHSQSRGGARRSKA), 625-725 (SDTF…SELL), and 765-805 (VSRS…PGSV). Low complexity predominate over residues 626–654 (DTFSSSPSSTPMGSMESLSSHSSEQNSCS). Positions 670–693 (LCWTTPSPSTNGPKSPACTTSPDS) are enriched in polar residues. The segment covering 694–704 (SSKEDANKTDG) has biased composition (basic and acidic residues). The span at 710–721 (LSTSPGDRSSPA) shows a compositional bias: polar residues. The span at 782–793 (PPKDGMRFRDDS) shows a compositional bias: basic and acidic residues.

May influence blood pressure by functioning as a GTPase-activating protein in vascular smooth muscle. This Danio rerio (Zebrafish) protein is Rho GTPase-activating protein 42.